Reading from the N-terminus, the 175-residue chain is Gamma-crystallin B (175 aa).

Beta/gamma crystallin 'Greek key' domains follow at residues 2–40 (GKITFYEDRAFQGRSYECTTDCPNLQPYFSRCNSIRVES) and 41–83 (GCWM…CLIP). The tract at residues 84–88 (PHSGA) is connecting peptide. 2 Beta/gamma crystallin 'Greek key' domains span residues 89–129 (YRMK…NVLE) and 130–172 (GSWI…RRVM).

It belongs to the beta/gamma-crystallin family. In terms of assembly, monomer.

Crystallins are the dominant structural components of the vertebrate eye lens. The protein is Gamma-crystallin B (CRYGB) of Homo sapiens (Human).